Consider the following 146-residue polypeptide: Large ribosomal subunit protein eL28 (146 aa).

The interval Val123–His146 is disordered.

Belongs to the eukaryotic ribosomal protein eL28 family.

The sequence is that of Large ribosomal subunit protein eL28 from Trypanosoma cruzi.